We begin with the raw amino-acid sequence, 370 residues long: Capsular polysaccharide phosphotransferase (370 aa).

The protein belongs to the stealth family.

In terms of biological role, part of a capsular polysaccharide synthesis locus. The chain is Capsular polysaccharide phosphotransferase from Actinobacillus suis.